A 160-amino-acid polypeptide reads, in one-letter code: Large ribosomal subunit protein eL21 (160 aa).

Basic and acidic residues-rich tracts occupy residues 112-123 (NDQKKKEAKEKG) and 136-145 (REAHFVRTNG). The interval 112-145 (NDQKKKEAKEKGTWVQLKRQPAPPREAHFVRTNG) is disordered.

The protein belongs to the eukaryotic ribosomal protein eL21 family. As to quaternary structure, component of the large ribosomal subunit.

It localises to the cytoplasm. It is found in the cytosol. The protein localises to the endoplasmic reticulum. Component of the large ribosomal subunit. The ribosome is a large ribonucleoprotein complex responsible for the synthesis of proteins in the cell. This is Large ribosomal subunit protein eL21 from Mus musculus (Mouse).